Reading from the N-terminus, the 297-residue chain is Probable lipid kinase YegS-like (297 aa).

In terms of domain architecture, DAGKc spans 2–131 (STFPASLLIL…IDIARVNDKT (130 aa)). ATP-binding positions include T40, 66–72 (GDGTINE), and T93. Mg(2+) contacts are provided by L213, D216, and L218. The active-site Proton acceptor is the E269.

Belongs to the diacylglycerol/lipid kinase family. YegS lipid kinase subfamily. Mg(2+) serves as cofactor. Requires Ca(2+) as cofactor.

It localises to the cytoplasm. Functionally, probably phosphorylates lipids; the in vivo substrate is unknown. This is Probable lipid kinase YegS-like from Klebsiella pneumoniae (strain 342).